The sequence spans 422 residues: Serine--tRNA ligase (422 aa).

L-serine is bound at residue 229–231; that stretch reads TAE. 260–262 provides a ligand contact to ATP; it reads RAE. Residue Glu-283 participates in L-serine binding. Residue 347–350 coordinates ATP; the sequence is EISS. Ser-383 is an L-serine binding site.

Belongs to the class-II aminoacyl-tRNA synthetase family. Type-1 seryl-tRNA synthetase subfamily. In terms of assembly, homodimer. The tRNA molecule binds across the dimer.

It is found in the cytoplasm. The catalysed reaction is tRNA(Ser) + L-serine + ATP = L-seryl-tRNA(Ser) + AMP + diphosphate + H(+). The enzyme catalyses tRNA(Sec) + L-serine + ATP = L-seryl-tRNA(Sec) + AMP + diphosphate + H(+). Its pathway is aminoacyl-tRNA biosynthesis; selenocysteinyl-tRNA(Sec) biosynthesis; L-seryl-tRNA(Sec) from L-serine and tRNA(Sec): step 1/1. Its function is as follows. Catalyzes the attachment of serine to tRNA(Ser). Is also able to aminoacylate tRNA(Sec) with serine, to form the misacylated tRNA L-seryl-tRNA(Sec), which will be further converted into selenocysteinyl-tRNA(Sec). This chain is Serine--tRNA ligase, found in Halothermothrix orenii (strain H 168 / OCM 544 / DSM 9562).